Consider the following 328-residue polypeptide: 3-dehydroquinate synthase (328 aa).

It belongs to the archaeal-type DHQ synthase family.

The enzyme catalyses 2-amino-2,3,7-trideoxy-D-lyxo-hept-6-ulosonate + NAD(+) + H2O = 3-dehydroquinate + NH4(+) + NADH + H(+). In terms of biological role, catalyzes the oxidative deamination and cyclization of 2-amino-3,7-dideoxy-D-threo-hept-6-ulosonic acid (ADH) to yield 3-dehydroquinate (DHQ), which is fed into the canonical shikimic pathway of aromatic amino acid biosynthesis. The chain is 3-dehydroquinate synthase from Methanosphaerula palustris (strain ATCC BAA-1556 / DSM 19958 / E1-9c).